Consider the following 507-residue polypeptide: Ribose import ATP-binding protein RbsA (507 aa).

ABC transporter domains lie at Leu7–Pro242 and Ile253–Thr497. An ATP-binding site is contributed by Gly39–Ser46.

This sequence belongs to the ABC transporter superfamily. Ribose importer (TC 3.A.1.2.1) family. As to quaternary structure, the complex is composed of an ATP-binding protein (RbsA), two transmembrane proteins (RbsC) and a solute-binding protein (RbsB).

The protein resides in the cell inner membrane. The enzyme catalyses D-ribose(out) + ATP + H2O = D-ribose(in) + ADP + phosphate + H(+). Functionally, part of the ABC transporter complex RbsABC involved in ribose import. Responsible for energy coupling to the transport system. This Yersinia pestis bv. Antiqua (strain Antiqua) protein is Ribose import ATP-binding protein RbsA.